A 506-amino-acid chain; its full sequence is Zinc finger and SCAN domain containing protein 4F (506 aa).

The tract at residues 1-24 (MASQQAPAKDLQTNNLEFTPTDSS) is disordered. Positions 37–119 (SAQLNFSPSN…RFMESLTDEC (83 aa)) constitute an SCAN box domain. C2H2-type zinc fingers lie at residues 395–417 (YKCE…QRTH), 424–446 (LLCV…EIIH), 452–474 (FKCS…EMIH), and 480–503 (YVCS…RNYH).

Up-regulated in blastocyst outgrowths and is detectable in a mosaic fashion in ES cultures.

It localises to the nucleus. It is found in the chromosome. The protein resides in the telomere. Functionally, transcription factor required to regulate early development. Binds telomeres and plays a key role in genomic stability by regulating telomere elongation. Acts as an activator of spontaneous telomere sister chromatid exchange (T-SCE) and telomere elongation. In Mus musculus (Mouse), this protein is Zinc finger and SCAN domain containing protein 4F (Zscan4f).